Consider the following 88-residue polypeptide: Putative carnobacteriocin-BM1 immunity protein (88 aa).

Functionally, could impart immunity to carnobacteriocin-BM1 to naturally sensitive host strains. The chain is Putative carnobacteriocin-BM1 immunity protein from Carnobacterium maltaromaticum (Carnobacterium piscicola).